Here is a 237-residue protein sequence, read N- to C-terminus: tRNA (guanine-N(7)-)-methyltransferase (237 aa).

4 residues coordinate S-adenosyl-L-methionine: glutamate 65, glutamate 90, aspartate 117, and aspartate 140. Aspartate 140 is an active-site residue. Residues lysine 144, aspartate 176, and 212–215 (TKFE) each bind substrate. The disordered stretch occupies residues 197–217 (TCGPRQFSPRGERPETKFERR). Residues 206-217 (RGERPETKFERR) show a composition bias toward basic and acidic residues.

Belongs to the class I-like SAM-binding methyltransferase superfamily. TrmB family.

The catalysed reaction is guanosine(46) in tRNA + S-adenosyl-L-methionine = N(7)-methylguanosine(46) in tRNA + S-adenosyl-L-homocysteine. The protein operates within tRNA modification; N(7)-methylguanine-tRNA biosynthesis. Its function is as follows. Catalyzes the formation of N(7)-methylguanine at position 46 (m7G46) in tRNA. The protein is tRNA (guanine-N(7)-)-methyltransferase of Alkalilimnicola ehrlichii (strain ATCC BAA-1101 / DSM 17681 / MLHE-1).